Consider the following 378-residue polypeptide: Coiled-coil domain-containing protein 74A (378 aa).

3 disordered regions span residues methionine 1–aspartate 52, glycine 128–leucine 211, and glutamate 301–serine 328. Positions leucine 34 to serine 44 are enriched in polar residues. Positions glutamine 47–isoleucine 90 form a coiled coil. The segment covering arginine 141–arginine 151 has biased composition (basic residues). The span at aspartate 165–glycine 182 shows a compositional bias: polar residues. Composition is skewed to basic and acidic residues over residues glutamine 194–aspartate 205 and serine 314–histidine 323.

In Homo sapiens (Human), this protein is Coiled-coil domain-containing protein 74A (CCDC74A).